The sequence spans 391 residues: DNA-directed RNA polymerase subunit Rpo1C (391 aa).

It belongs to the RNA polymerase beta' chain family. In terms of assembly, part of the RNA polymerase complex.

The protein localises to the cytoplasm. The enzyme catalyses RNA(n) + a ribonucleoside 5'-triphosphate = RNA(n+1) + diphosphate. Functionally, DNA-dependent RNA polymerase (RNAP) catalyzes the transcription of DNA into RNA using the four ribonucleoside triphosphates as substrates. Forms part of the jaw domain. The sequence is that of DNA-directed RNA polymerase subunit Rpo1C from Thermococcus onnurineus (strain NA1).